Here is a 100-residue protein sequence, read N- to C-terminus: Urease subunit gamma (100 aa).

Belongs to the urease gamma subunit family. Heterotrimer of UreA (gamma), UreB (beta) and UreC (alpha) subunits. Three heterotrimers associate to form the active enzyme.

It is found in the cytoplasm. The enzyme catalyses urea + 2 H2O + H(+) = hydrogencarbonate + 2 NH4(+). Its pathway is nitrogen metabolism; urea degradation; CO(2) and NH(3) from urea (urease route): step 1/1. This chain is Urease subunit gamma, found in Nitrosospira multiformis (strain ATCC 25196 / NCIMB 11849 / C 71).